Here is a 203-residue protein sequence, read N- to C-terminus: RNA chaperone ProQ (203 aa).

The segment at 111-138 (KAKRQALAPKKPAKKVAPKRAPAVKKER) is disordered.

The protein belongs to the ProQ family.

The protein resides in the cytoplasm. RNA chaperone with significant RNA binding, RNA strand exchange and RNA duplexing activities. This Shewanella frigidimarina (strain NCIMB 400) protein is RNA chaperone ProQ.